The chain runs to 96 residues: Large ribosomal subunit protein eL14 (96 aa).

Belongs to the eukaryotic ribosomal protein eL14 family.

This is Large ribosomal subunit protein eL14 from Saccharolobus solfataricus (strain ATCC 35092 / DSM 1617 / JCM 11322 / P2) (Sulfolobus solfataricus).